A 396-amino-acid chain; its full sequence is Elongation factor Tu (396 aa).

The tr-type G domain occupies 10 to 205; sequence KPHVNIGTIG…ACDDSIPDPE (196 aa). Residues 19–26 form a G1 region; sequence GHVDHGKT. Position 19 to 26 (19 to 26) interacts with GTP; the sequence is GHVDHGKT. T26 contributes to the Mg(2+) binding site. The G2 stretch occupies residues 62 to 66; sequence GITIN. The G3 stretch occupies residues 83-86; that stretch reads DAPG. GTP is bound by residues 83-87 and 138-141; these read DAPGH and NKCD. Residues 138-141 are G4; that stretch reads NKCD. The tract at residues 175–177 is G5; that stretch reads SAL.

Belongs to the TRAFAC class translation factor GTPase superfamily. Classic translation factor GTPase family. EF-Tu/EF-1A subfamily. Monomer.

The protein localises to the cytoplasm. The enzyme catalyses GTP + H2O = GDP + phosphate + H(+). In terms of biological role, GTP hydrolase that promotes the GTP-dependent binding of aminoacyl-tRNA to the A-site of ribosomes during protein biosynthesis. The chain is Elongation factor Tu from Corynebacterium diphtheriae (strain ATCC 700971 / NCTC 13129 / Biotype gravis).